We begin with the raw amino-acid sequence, 536 residues long: Probable cytochrome P450 318a1 (536 aa).

Positions 439 to 457 are enriched in basic and acidic residues; sequence EEEQLSKGHNDSGSGEKRR. Residues 439-460 form a disordered region; that stretch reads EEEQLSKGHNDSGSGEKRRQRD. A heme-binding site is contributed by Cys477.

This sequence belongs to the cytochrome P450 family. Heme is required as a cofactor.

Its subcellular location is the endoplasmic reticulum membrane. The protein localises to the microsome membrane. Its function is as follows. May be involved in the metabolism of insect hormones and in the breakdown of synthetic insecticides. This is Probable cytochrome P450 318a1 (Cyp318a1) from Drosophila melanogaster (Fruit fly).